The sequence spans 465 residues: GTPase Der (465 aa).

EngA-type G domains follow at residues Pro3–Gly167 and Ile179–Asn352. Residues Gly9–Ser16, Asp57–Ile61, Asn119–Asp122, Gly185–Ser192, Asp232–Leu236, and Asn297–Asp300 contribute to the GTP site. A KH-like domain is found at Lys353 to Thr437.

Belongs to the TRAFAC class TrmE-Era-EngA-EngB-Septin-like GTPase superfamily. EngA (Der) GTPase family. As to quaternary structure, associates with the 50S ribosomal subunit.

Its function is as follows. GTPase that plays an essential role in the late steps of ribosome biogenesis. The chain is GTPase Der from Stenotrophomonas maltophilia (strain R551-3).